We begin with the raw amino-acid sequence, 328 residues long: Methionyl-tRNA formyltransferase (328 aa).

110–113 (SLLP) contacts (6S)-5,6,7,8-tetrahydrofolate.

The protein belongs to the Fmt family.

The enzyme catalyses L-methionyl-tRNA(fMet) + (6R)-10-formyltetrahydrofolate = N-formyl-L-methionyl-tRNA(fMet) + (6S)-5,6,7,8-tetrahydrofolate + H(+). In terms of biological role, attaches a formyl group to the free amino group of methionyl-tRNA(fMet). The formyl group appears to play a dual role in the initiator identity of N-formylmethionyl-tRNA by promoting its recognition by IF2 and preventing the misappropriation of this tRNA by the elongation apparatus. This Prochlorococcus marinus (strain MIT 9312) protein is Methionyl-tRNA formyltransferase.